The following is a 487-amino-acid chain: Putative B3 domain-containing protein At1g78640 (487 aa).

2 DNA-binding regions (TF-B3) span residues 171–269 (RLLL…QQGT) and 379–474 (RLTL…LFRV).

The protein localises to the nucleus. This chain is Putative B3 domain-containing protein At1g78640, found in Arabidopsis thaliana (Mouse-ear cress).